A 393-amino-acid chain; its full sequence is Fractalkine (393 aa).

The signal sequence occupies residues 1–24 (MAPSQLAWLLRLAAFFHLCTLLAG). The interval 25–100 (QHLGMTKCNI…HQTAALTRNG (76 aa)) is chemokine and involved in interaction with ITGAV:ITGB3 and ITGA4:ITGB1. Over 25-337 (QHLGMTKCNI…PDSQAATRRQ (313 aa)) the chain is Extracellular. 2 disulfides stabilise this stretch: Cys32/Cys58 and Cys36/Cys74. An N-linked (GlcNAc...) asparagine glycan is attached at Asn33. Positions 101 to 337 (GKFEKRVDNV…PDSQAATRRQ (237 aa)) are mucin-like stalk. Disordered stretches follow at residues 114–184 (ITSA…PQST) and 213–303 (EKAT…SGSQ). Composition is skewed to polar residues over residues 153–172 (GTSQEPPAAVTGSSPSTSKA) and 223–240 (ALSTQASTTSSPKQNVGS). The chain crosses the membrane as a helical span at residues 338–358 (AVGLLAFLGLLFCLGVAMFAY). Over 359 to 393 (QSLQGCPRKMAGEMVEGLRYVPRSCGSNSYVLVPV) the chain is Cytoplasmic.

It belongs to the intercrine delta family. In terms of assembly, monomer. Forms a ternary complex with CX3CR1 and ITGAV:ITGB3 or ITGA4:ITGB1. In terms of processing, a soluble short form may be released by proteolytic cleavage from the long membrane-anchored form. In terms of tissue distribution, highest levels in brain (neurons). Significant levels in kidney, heart, lung and adrenal gland.

Its subcellular location is the cell membrane. It localises to the secreted. Its function is as follows. Chemokine that acts as a ligand for both CX3CR1 and integrins ITGAV:ITGB3 and ITGA4:ITGB1. The CX3CR1-CX3CL1 signaling exerts distinct functions in different tissue compartments, such as immune response, inflammation, cell adhesion and chemotaxis. Regulates leukocyte adhesion and migration processes at the endothelium. Can activate integrins in both a CX3CR1-dependent and CX3CR1-independent manner. In the presence of CX3CR1, activates integrins by binding to the classical ligand-binding site (site 1) in integrins. In the absence of CX3CR1, binds to a second site (site 2) in integrins which is distinct from site 1 and enhances the binding of other integrin ligands to site 1. The soluble form is chemotactic for T-cells and monocytes, but not for neutrophils. Functionally, the membrane-bound form promotes adhesion of those leukocytes to endothelial cells. The sequence is that of Fractalkine (Cx3cl1) from Rattus norvegicus (Rat).